The sequence spans 517 residues: Crotonobetaine/carnitine--CoA ligase (517 aa).

Belongs to the ATP-dependent AMP-binding enzyme family.

The catalysed reaction is 4-(trimethylamino)butanoate + ATP + CoA = 4-(trimethylamino)butanoyl-CoA + AMP + diphosphate. It catalyses the reaction crotonobetaine + ATP + CoA = crotonobetainyl-CoA + AMP + diphosphate. It carries out the reaction (R)-carnitine + ATP + CoA = (R)-carnitinyl-CoA + AMP + diphosphate. The protein operates within amine and polyamine metabolism; carnitine metabolism. Functionally, catalyzes the transfer of CoA to carnitine, generating the initial carnitinyl-CoA needed for the CaiB reaction cycle. Also has activity toward crotonobetaine and gamma-butyrobetaine. This is Crotonobetaine/carnitine--CoA ligase from Citrobacter koseri (strain ATCC BAA-895 / CDC 4225-83 / SGSC4696).